The primary structure comprises 253 residues: MSQTPMPQPDQAPPVDVGQPVDEAEAKRRRFKTHGRKKGKVNDTRLARIEAGLLALSLPPGSADRGALIDQLGGNGQSQRVILEIGFGNGETLAALAARHPEDCFIGIDVFLEGFGTLLNRLTRGDISNVRLVCQNALQVLLERIPDASLDGVIINFPDPWRKKRHFKRRIVQTEFLDALAPKMRSGADLTLATDWANYAEWMVAHLEPHTAFVNQAEPGPFAAPPPWWIETNFERKGVAAGRIIRHLHYKKR.

The span at 1–12 shows a compositional bias: pro residues; sequence MSQTPMPQPDQA. The disordered stretch occupies residues 1–39; the sequence is MSQTPMPQPDQAPPVDVGQPVDEAEAKRRRFKTHGRKKG. Over residues 27–39 the composition is skewed to basic residues; that stretch reads KRRRFKTHGRKKG. 4 residues coordinate S-adenosyl-L-methionine: E84, D109, N136, and D159. D159 is a catalytic residue. Residues K163, D195, and 232-235 each bind substrate; that span reads TNFE.

It belongs to the class I-like SAM-binding methyltransferase superfamily. TrmB family.

The catalysed reaction is guanosine(46) in tRNA + S-adenosyl-L-methionine = N(7)-methylguanosine(46) in tRNA + S-adenosyl-L-homocysteine. Its pathway is tRNA modification; N(7)-methylguanine-tRNA biosynthesis. Functionally, catalyzes the formation of N(7)-methylguanine at position 46 (m7G46) in tRNA. This Magnetococcus marinus (strain ATCC BAA-1437 / JCM 17883 / MC-1) protein is tRNA (guanine-N(7)-)-methyltransferase.